The primary structure comprises 178 residues: Peptide deformylase (178 aa).

Fe cation is bound by residues Cys-92 and His-134. Glu-135 is an active-site residue. His-138 contacts Fe cation.

It belongs to the polypeptide deformylase family. Fe(2+) serves as cofactor.

The enzyme catalyses N-terminal N-formyl-L-methionyl-[peptide] + H2O = N-terminal L-methionyl-[peptide] + formate. Functionally, removes the formyl group from the N-terminal Met of newly synthesized proteins. Requires at least a dipeptide for an efficient rate of reaction. N-terminal L-methionine is a prerequisite for activity but the enzyme has broad specificity at other positions. This chain is Peptide deformylase, found in Alkalilimnicola ehrlichii (strain ATCC BAA-1101 / DSM 17681 / MLHE-1).